We begin with the raw amino-acid sequence, 330 residues long: tRNA U34 carboxymethyltransferase (330 aa).

Carboxy-S-adenosyl-L-methionine contacts are provided by residues Lys-91, Trp-105, Lys-110, Gly-130, 152-154, 181-182, Met-196, Tyr-200, and Arg-315; these read DPS and IE.

The protein belongs to the class I-like SAM-binding methyltransferase superfamily. CmoB family. Homotetramer.

The enzyme catalyses carboxy-S-adenosyl-L-methionine + 5-hydroxyuridine(34) in tRNA = 5-carboxymethoxyuridine(34) in tRNA + S-adenosyl-L-homocysteine + H(+). In terms of biological role, catalyzes carboxymethyl transfer from carboxy-S-adenosyl-L-methionine (Cx-SAM) to 5-hydroxyuridine (ho5U) to form 5-carboxymethoxyuridine (cmo5U) at position 34 in tRNAs. The chain is tRNA U34 carboxymethyltransferase from Shewanella amazonensis (strain ATCC BAA-1098 / SB2B).